The following is an 891-amino-acid chain: Aconitate hydratase A (891 aa).

The [4Fe-4S] cluster site is built by C435, C501, and C504.

This sequence belongs to the aconitase/IPM isomerase family. As to quaternary structure, monomer. [4Fe-4S] cluster is required as a cofactor.

It carries out the reaction citrate = D-threo-isocitrate. The catalysed reaction is (2S,3R)-3-hydroxybutane-1,2,3-tricarboxylate = 2-methyl-cis-aconitate + H2O. It participates in carbohydrate metabolism; tricarboxylic acid cycle; isocitrate from oxaloacetate: step 2/2. It functions in the pathway organic acid metabolism; propanoate degradation. Its function is as follows. Involved in the catabolism of short chain fatty acids (SCFA) via the tricarboxylic acid (TCA)(acetyl degradation route) and probably the 2-methylcitrate cycle I (propionate degradation route). Catalyzes the reversible isomerization of citrate to isocitrate via cis-aconitate. The apo form of AcnA functions as a RNA-binding regulatory protein. Could catalyze the hydration of 2-methyl-cis-aconitate to yield (2R,3S)-2-methylisocitrate. This is Aconitate hydratase A (acn) from Legionella pneumophila subsp. pneumophila (strain Philadelphia 1 / ATCC 33152 / DSM 7513).